Here is a 424-residue protein sequence, read N- to C-terminus: 5-methylthioadenosine/S-adenosylhomocysteine deaminase (424 aa).

Residues histidine 60 and histidine 62 each contribute to the Zn(2+) site. 2 residues coordinate substrate: glutamate 89 and histidine 181. Zn(2+) is bound at residue histidine 208. Residues glutamate 211 and aspartate 296 each contribute to the substrate site. Residue aspartate 296 coordinates Zn(2+).

Belongs to the metallo-dependent hydrolases superfamily. MTA/SAH deaminase family. The cofactor is Zn(2+).

It catalyses the reaction S-adenosyl-L-homocysteine + H2O + H(+) = S-inosyl-L-homocysteine + NH4(+). The enzyme catalyses S-methyl-5'-thioadenosine + H2O + H(+) = S-methyl-5'-thioinosine + NH4(+). Its function is as follows. Catalyzes the deamination of 5-methylthioadenosine and S-adenosyl-L-homocysteine into 5-methylthioinosine and S-inosyl-L-homocysteine, respectively. Is also able to deaminate adenosine. This chain is 5-methylthioadenosine/S-adenosylhomocysteine deaminase, found in Thermococcus onnurineus (strain NA1).